The primary structure comprises 265 residues: Small ribosomal subunit protein uS2 (265 aa).

It belongs to the universal ribosomal protein uS2 family.

In Ligilactobacillus salivarius (strain UCC118) (Lactobacillus salivarius), this protein is Small ribosomal subunit protein uS2.